A 210-amino-acid chain; its full sequence is ATP-dependent Clp protease proteolytic subunit (210 aa).

The active-site Nucleophile is the Ser107. The active site involves His132.

It belongs to the peptidase S14 family. As to quaternary structure, fourteen ClpP subunits assemble into 2 heptameric rings which stack back to back to give a disk-like structure with a central cavity, resembling the structure of eukaryotic proteasomes.

The protein localises to the cytoplasm. It catalyses the reaction Hydrolysis of proteins to small peptides in the presence of ATP and magnesium. alpha-casein is the usual test substrate. In the absence of ATP, only oligopeptides shorter than five residues are hydrolyzed (such as succinyl-Leu-Tyr-|-NHMec, and Leu-Tyr-Leu-|-Tyr-Trp, in which cleavage of the -Tyr-|-Leu- and -Tyr-|-Trp bonds also occurs).. Its function is as follows. Cleaves peptides in various proteins in a process that requires ATP hydrolysis. Has a chymotrypsin-like activity. Plays a major role in the degradation of misfolded proteins. In Ruegeria sp. (strain TM1040) (Silicibacter sp.), this protein is ATP-dependent Clp protease proteolytic subunit.